We begin with the raw amino-acid sequence, 312 residues long: MDIIFYHPTFDTQWWIEALHKAIPQARVRAWKSGDNESADYALVWHPPVEMLAGRDLKAVFALGAGVDSILSKLQAHPEMLKPSVPLFRLEDTGMGEQMQEYAVSQVLHWFRRFDDYRIQQNSSHWQPLPEYHREDFTIGILGAGVLGSKVAQSLQTWRFPLRCWSRTRKSWPGVQSFAGREELSAFLSQCRVLINLLPNTPETVGIINQQLLEKLPDGAYLLNLARGVHVVEDDLLAALDSGKVKGAMLDVFNREPLPPESPLWQHPRVTITPHVAAITRPAEAVDYISRTIAQLEKGERVCGQVDRARGY.

The active site involves Arg-227. His-275 functions as the Proton donor in the catalytic mechanism.

It belongs to the D-isomer specific 2-hydroxyacid dehydrogenase family. GhrA subfamily.

The protein resides in the cytoplasm. It catalyses the reaction glycolate + NADP(+) = glyoxylate + NADPH + H(+). It carries out the reaction (R)-glycerate + NAD(+) = 3-hydroxypyruvate + NADH + H(+). The enzyme catalyses (R)-glycerate + NADP(+) = 3-hydroxypyruvate + NADPH + H(+). In terms of biological role, catalyzes the NADPH-dependent reduction of glyoxylate and hydroxypyruvate into glycolate and glycerate, respectively. In Escherichia coli O127:H6 (strain E2348/69 / EPEC), this protein is Glyoxylate/hydroxypyruvate reductase A.